We begin with the raw amino-acid sequence, 256 residues long: Hemin import ATP-binding protein HmuV (256 aa).

An ABC transporter domain is found at 2–239 (IHAFAVSVIR…ANVREVYQVD (238 aa)). 34–41 (GPNGAGKS) serves as a coordination point for ATP.

Belongs to the ABC transporter superfamily. Heme (hemin) importer (TC 3.A.1.14.5) family. In terms of assembly, the complex is composed of two ATP-binding proteins (HmuV), two transmembrane proteins (HmuU) and a solute-binding protein (HmuT).

Its subcellular location is the cell inner membrane. Part of the ABC transporter complex HmuTUV involved in hemin import. Responsible for energy coupling to the transport system. The sequence is that of Hemin import ATP-binding protein HmuV from Hahella chejuensis (strain KCTC 2396).